A 66-amino-acid chain; its full sequence is Large ribosomal subunit protein bL35 (66 aa).

This sequence belongs to the bacterial ribosomal protein bL35 family.

The polypeptide is Large ribosomal subunit protein bL35 (Parvibaculum lavamentivorans (strain DS-1 / DSM 13023 / NCIMB 13966)).